The primary structure comprises 491 residues: Ribulose-1,5 bisphosphate carboxylase/oxygenase large subunit N-methyltransferase, chloroplastic (491 aa).

One can recognise an SET domain in the interval 67–291 (EGVVTTKTPV…AGDQLFIQYD (225 aa)).

The protein belongs to the class V-like SAM-binding methyltransferase superfamily. Plant protein-lysine LSMT methyltransferase family.

It is found in the plastid. The protein resides in the chloroplast. It catalyses the reaction L-lysyl-[ribulose-1,5-bisphosphate carboxylase] + 3 S-adenosyl-L-methionine = N(6),N(6),N(6)-trimethyl-L-lysyl-[ribulose-1,5-bisphosphate carboxylase] + 3 S-adenosyl-L-homocysteine + 3 H(+). Its function is as follows. Methylates 'Lys-14' of the large subunit of RuBisCO. This Nicotiana tabacum (Common tobacco) protein is Ribulose-1,5 bisphosphate carboxylase/oxygenase large subunit N-methyltransferase, chloroplastic (RBCMT).